A 26-amino-acid polypeptide reads, in one-letter code: Delta-hemolysin (26 aa).

At methionine 1 the chain carries N-formylmethionine.

The protein belongs to the delta-lysin family.

The protein localises to the secreted. It is found in the host cell membrane. Functionally, lyses erythrocytes and many other mammalian cells. This Staphylococcus aureus (strain Mu50 / ATCC 700699) protein is Delta-hemolysin (hld).